Reading from the N-terminus, the 188-residue chain is Pyridoxal 5'-phosphate synthase subunit PdxT (188 aa).

47–49 contacts L-glutamine; it reads GES. Cys-79 functions as the Nucleophile in the catalytic mechanism. L-glutamine-binding positions include Arg-105 and 134 to 135; that span reads IR. Catalysis depends on charge relay system residues His-170 and Glu-172.

The protein belongs to the glutaminase PdxT/SNO family. As to quaternary structure, in the presence of PdxS, forms a dodecamer of heterodimers. Only shows activity in the heterodimer.

It carries out the reaction aldehydo-D-ribose 5-phosphate + D-glyceraldehyde 3-phosphate + L-glutamine = pyridoxal 5'-phosphate + L-glutamate + phosphate + 3 H2O + H(+). The catalysed reaction is L-glutamine + H2O = L-glutamate + NH4(+). The protein operates within cofactor biosynthesis; pyridoxal 5'-phosphate biosynthesis. In terms of biological role, catalyzes the hydrolysis of glutamine to glutamate and ammonia as part of the biosynthesis of pyridoxal 5'-phosphate. The resulting ammonia molecule is channeled to the active site of PdxS. The protein is Pyridoxal 5'-phosphate synthase subunit PdxT of Listeria welshimeri serovar 6b (strain ATCC 35897 / DSM 20650 / CCUG 15529 / CIP 8149 / NCTC 11857 / SLCC 5334 / V8).